The following is a 234-amino-acid chain: Urease subunit alpha (234 aa).

The urease gamma stretch occupies residues 1–102 (MKLTPKELDK…LVTIHTPVEA (102 aa)). A urease beta region spans residues 103-234 (GSDKLAPGEV…GTINCGCDNK (132 aa)).

It in the N-terminal section; belongs to the urease gamma subunit family. This sequence in the C-terminal section; belongs to the urease beta subunit family. In terms of assembly, heterohexamer of 3 UreA (alpha) and 3 UreB (beta) subunits.

Its subcellular location is the cytoplasm. The catalysed reaction is urea + 2 H2O + H(+) = hydrogencarbonate + 2 NH4(+). Its pathway is nitrogen metabolism; urea degradation; CO(2) and NH(3) from urea (urease route): step 1/1. The sequence is that of Urease subunit alpha from Helicobacter heilmannii.